The following is a 908-amino-acid chain: DNA (cytosine-5)-methyltransferase 3A (908 aa).

The span at 1 to 13 shows a compositional bias: low complexity; that stretch reads MPSSGPGDTSSSS. Disordered stretches follow at residues 1 to 183 and 226 to 281; these read MPSS…PMPR and NQAS…PEYE. Residues 14–37 are compositionally biased toward basic and acidic residues; it reads LEREDDRKEGEEQEENRGKEERQE. Basic residues predominate over residues 44–54; it reads KVGRPGRKRKH. Residues 69-80 are compositionally biased toward polar residues; it reads TTKSQPMAQDSG. At S102 the chain carries Phosphoserine. Positions 110 to 124 are enriched in low complexity; sequence GAPAEGEGTETPPEA. Phosphothreonine is present on T120. K158 participates in a covalent cross-link: Glycyl lysine isopeptide (Lys-Gly) (interchain with G-Cter in SUMO2). R167 carries the post-translational modification Omega-N-methylarginine. Residues 195–399 form an interaction with DNMT1 and DNMT3B region; the sequence is SKRKRDEWLA…DSGKAVEVQN (205 aa). Residues S239 and S251 each carry the phosphoserine modification. Positions 242 to 256 are enriched in polar residues; that stretch reads AVQQPTDPASPTVAT. Phosphothreonine is present on T257. Residues 265–275 are compositionally biased toward basic and acidic residues; that stretch reads AGDKNATKAAD. One can recognise a PWWP domain in the interval 288-346; that stretch reads IGELVWGKLRGFSWWPGRIVSWWMTGRSRAAEGTRWVMWFGDGKFSVVCVEKLMPLSSF. 2 positions are modified to phosphoserine: S386 and S389. The segment at 443–462 is disordered; that stretch reads AYAPPPPAKKPRKSTTEKPK. The ADD domain occupies 478 to 610; that stretch reads EVRQKCRNIE…LQMFFANNHD (133 aa). The GATA-type; atypical zinc-finger motif lies at 489–519; the sequence is ICISCGSLNVTLEHPLFIGGMCQNCKNCFLE. Positions 490–582 are interaction with the PRC2/EED-EZH2 complex; it reads CISCGSLNVT…KEDPWNCYMC (93 aa). A PHD-type; atypical zinc finger spans residues 530–586; that stretch reads QSYCTICCGGREVLMCGNNNCCRCFCVECVDLLVGPGAAQAAIKEDPWNCYMCGHKG. The SAM-dependent MTase C5-type domain occupies 630–908; sequence IRVLSLFDGI…APLKEYFACV (279 aa). Residues 637–641, E660, and 682–684 contribute to the S-adenosyl-L-methionine site; these read DGIAT and DVR. Residue C706 is part of the active site. C706 carries the S-methylcysteine; by autocatalysis modification. 887 to 889 serves as a coordination point for S-adenosyl-L-methionine; that stretch reads RSW.

This sequence belongs to the class I-like SAM-binding methyltransferase superfamily. C5-methyltransferase family. As to quaternary structure, heterotetramer composed of 1 DNMT3A homodimer and 2 DNMT3L subunits (DNMT3L-DNMT3A-DNMT3A-DNMT3L). Interacts with DNMT1 and DNMT3B. Interacts with MPHOSPH8. Interacts with histone H3 that is not methylated at 'Lys-4' (H3K4). Binds the ZBTB18 transcriptional repressor. Interacts with SETDB1. Associates with HDAC1 through its ADD domain. Interacts with UHRF1. Interacts with the PRC2/EED-EZH2 complex. Interacts with UBC9, PIAS1 and PIAS2. Interacts with SPOCD1. Interacts with ZNF263; recruited to the SIX3 promoter along with other proteins involved in chromatin modification and transcriptional corepression where it contributes to transcriptional repression. In terms of processing, auto-methylated at Cys-706: auto-methylation takes place in absence of DNA substrate and inactivates the DNA methyltransferase activity. Inactivation by auto-methylation may be used to inactivate unused DNA methyltransferases in the cell. Sumoylated; sumoylation disrupts the ability to interact with histone deacetylases (HDAC1 and HDAC2) and repress transcription. As to expression, isoform 1 is expressed ubiquitously at low levels. Expression of isoform 2 is restricted to tissues containing cells which are undergoing active de novo methylation, including spleen, testis and thymus.

The protein localises to the nucleus. It is found in the chromosome. It localises to the cytoplasm. It catalyses the reaction a 2'-deoxycytidine in DNA + S-adenosyl-L-methionine = a 5-methyl-2'-deoxycytidine in DNA + S-adenosyl-L-homocysteine + H(+). It carries out the reaction L-cysteinyl-[protein] + S-adenosyl-L-methionine = S-methyl-L-cysteinyl-[protein] + S-adenosyl-L-homocysteine + H(+). Its activity is regulated as follows. Activated by binding to the regulatory factor DNMT3L. Auto-methylation at Cys-706 in absence of DNA inactivates the DNA methyltransferase activity. Required for genome-wide de novo methylation and is essential for the establishment of DNA methylation patterns during development. DNA methylation is coordinated with methylation of histones. It modifies DNA in a non-processive manner and also methylates non-CpG sites. May preferentially methylate DNA linker between 2 nucleosomal cores and is inhibited by histone H1. Plays a role in paternal and maternal imprinting. Required for methylation of most imprinted loci in germ cells. Acts as a transcriptional corepressor for ZBTB18. Recruited to trimethylated 'Lys-36' of histone H3 (H3K36me3) sites. Can actively repress transcription through the recruitment of HDAC activity. Also has weak auto-methylation activity on Cys-706 in absence of DNA. The polypeptide is DNA (cytosine-5)-methyltransferase 3A (Mus musculus (Mouse)).